The primary structure comprises 383 residues: Succinyl-diaminopimelate desuccinylase (383 aa).

Histidine 74 lines the Zn(2+) pocket. The active site involves aspartate 76. Residue aspartate 107 coordinates Zn(2+). Glutamate 141 serves as the catalytic Proton acceptor. Zn(2+) contacts are provided by glutamate 142, glutamate 170, and histidine 356.

This sequence belongs to the peptidase M20A family. DapE subfamily. In terms of assembly, homodimer. It depends on Zn(2+) as a cofactor. Co(2+) serves as cofactor.

It catalyses the reaction N-succinyl-(2S,6S)-2,6-diaminopimelate + H2O = (2S,6S)-2,6-diaminopimelate + succinate. The protein operates within amino-acid biosynthesis; L-lysine biosynthesis via DAP pathway; LL-2,6-diaminopimelate from (S)-tetrahydrodipicolinate (succinylase route): step 3/3. Catalyzes the hydrolysis of N-succinyl-L,L-diaminopimelic acid (SDAP), forming succinate and LL-2,6-diaminopimelate (DAP), an intermediate involved in the bacterial biosynthesis of lysine and meso-diaminopimelic acid, an essential component of bacterial cell walls. This Cupriavidus necator (strain ATCC 17699 / DSM 428 / KCTC 22496 / NCIMB 10442 / H16 / Stanier 337) (Ralstonia eutropha) protein is Succinyl-diaminopimelate desuccinylase.